Consider the following 184-residue polypeptide: Large ribosomal subunit protein uL15 (184 aa).

The segment at 1-50 is disordered; the sequence is MDLSSLRPAKGAVKNKKRVGRGQGSGNGTTAGKGNKGQQARSGYKRPINE. Positions 21–35 are enriched in gly residues; it reads RGQGSGNGTTAGKGN.

It belongs to the universal ribosomal protein uL15 family. In terms of assembly, part of the 50S ribosomal subunit.

Its function is as follows. Binds to the 23S rRNA. In Chlorobium luteolum (strain DSM 273 / BCRC 81028 / 2530) (Pelodictyon luteolum), this protein is Large ribosomal subunit protein uL15.